Reading from the N-terminus, the 297-residue chain is Release factor glutamine methyltransferase (297 aa).

Residues 134 to 138, D157, and N200 each bind S-adenosyl-L-methionine; that span reads GTGSG. Substrate is bound at residue 200–203; that stretch reads NPPY.

Belongs to the protein N5-glutamine methyltransferase family. PrmC subfamily.

It carries out the reaction L-glutaminyl-[peptide chain release factor] + S-adenosyl-L-methionine = N(5)-methyl-L-glutaminyl-[peptide chain release factor] + S-adenosyl-L-homocysteine + H(+). Its function is as follows. Methylates the class 1 translation termination release factors RF1/PrfA and RF2/PrfB on the glutamine residue of the universally conserved GGQ motif. In Bradyrhizobium diazoefficiens (strain JCM 10833 / BCRC 13528 / IAM 13628 / NBRC 14792 / USDA 110), this protein is Release factor glutamine methyltransferase.